A 331-amino-acid polypeptide reads, in one-letter code: NADH-quinone oxidoreductase subunit H (331 aa).

Transmembrane regions (helical) follow at residues Ala7–Ile27, Met81–Val101, Ile114–Gly134, Ile154–Phe174, Val187–Val207, Phe238–Phe258, Trp271–Ile291, and Val310–Ala330.

This sequence belongs to the complex I subunit 1 family. NDH-1 is composed of 13 different subunits. Subunits NuoA, H, J, K, L, M, N constitute the membrane sector of the complex.

The protein resides in the cell inner membrane. The catalysed reaction is a quinone + NADH + 5 H(+)(in) = a quinol + NAD(+) + 4 H(+)(out). NDH-1 shuttles electrons from NADH, via FMN and iron-sulfur (Fe-S) centers, to quinones in the respiratory chain. The immediate electron acceptor for the enzyme in this species is believed to be ubiquinone. Couples the redox reaction to proton translocation (for every two electrons transferred, four hydrogen ions are translocated across the cytoplasmic membrane), and thus conserves the redox energy in a proton gradient. This subunit may bind ubiquinone. This is NADH-quinone oxidoreductase subunit H from Pseudomonas paraeruginosa (strain DSM 24068 / PA7) (Pseudomonas aeruginosa (strain PA7)).